A 447-amino-acid chain; its full sequence is Cysteine--tRNA ligase (447 aa).

Residue Cys-28 coordinates Zn(2+). The 'HIGH' region signature appears at 30–40 (PTVYNYIHIGN). Zn(2+) is bound by residues Cys-211, His-236, and Glu-240. The short motif at 268 to 272 (KMSKS) is the 'KMSKS' region element. Lys-271 provides a ligand contact to ATP.

Belongs to the class-I aminoacyl-tRNA synthetase family. Monomer. Zn(2+) is required as a cofactor.

The protein localises to the cytoplasm. The catalysed reaction is tRNA(Cys) + L-cysteine + ATP = L-cysteinyl-tRNA(Cys) + AMP + diphosphate. This Streptococcus pyogenes serotype M3 (strain ATCC BAA-595 / MGAS315) protein is Cysteine--tRNA ligase.